The primary structure comprises 349 residues: Core protein VP7 (349 aa).

2 N-linked (GlcNAc...) asparagine; by host glycosylation sites follow: Asn148 and Asn287.

Belongs to the orbivirus VP7 family.

It localises to the virion. Its function is as follows. The VP7 protein is one of the five proteins (with VP1, VP3, VP4, and VP6) which form the inner capsid of the virus. The protein is Core protein VP7 (Segment-7) of Epizootic hemorrhagic disease virus 1 (EHDV-1).